We begin with the raw amino-acid sequence, 326 residues long: Malate dehydrogenase (326 aa).

12–18 lines the NAD(+) pocket; the sequence is GGTGQIA. Residues R93 and R99 each coordinate substrate. NAD(+) is bound by residues N106, Q113, and 130-132; that span reads VGN. Positions 132 and 163 each coordinate substrate. H188 serves as the catalytic Proton acceptor.

The protein belongs to the LDH/MDH superfamily. MDH type 2 family.

It carries out the reaction (S)-malate + NAD(+) = oxaloacetate + NADH + H(+). Functionally, catalyzes the reversible oxidation of malate to oxaloacetate. The chain is Malate dehydrogenase from Chlamydia muridarum (strain MoPn / Nigg).